We begin with the raw amino-acid sequence, 131 residues long: Protein GLUTAMINE DUMPER 5 (131 aa).

Residues 1 to 34 (MRQFPSIRGNINEKMMTTMVESQTRSPWRTPVPY) are Extracellular-facing. Residues 35–55 (LFGGLAAMLGLIAFALLLLAC) traverse the membrane as a helical segment. Residues 56–131 (SYWRLSRQTE…GESKVTEENH (76 aa)) are Cytoplasmic-facing. The VIMAG signature appears at 88–92 (VIMAG).

The protein belongs to the GLUTAMINE DUMPER 1 (TC 9.B.60) family. In terms of tissue distribution, expressed in the vascular tissues. Also detected in guard cells.

The protein localises to the membrane. In terms of biological role, probable subunit of an amino acid transporter involved in the regulation of the amino acid metabolism. Stimulates amino acid export by activating nonselective amino acid facilitators. The protein is Protein GLUTAMINE DUMPER 5 (GDU5) of Arabidopsis thaliana (Mouse-ear cress).